The sequence spans 317 residues: N-acetyl-gamma-glutamyl-phosphate reductase (317 aa).

The active site involves Cys136.

It belongs to the NAGSA dehydrogenase family. Type 1 subfamily.

It localises to the cytoplasm. It catalyses the reaction N-acetyl-L-glutamate 5-semialdehyde + phosphate + NADP(+) = N-acetyl-L-glutamyl 5-phosphate + NADPH + H(+). The protein operates within amino-acid biosynthesis; L-arginine biosynthesis; N(2)-acetyl-L-ornithine from L-glutamate: step 3/4. Its function is as follows. Catalyzes the NADPH-dependent reduction of N-acetyl-5-glutamyl phosphate to yield N-acetyl-L-glutamate 5-semialdehyde. In Stenotrophomonas maltophilia (strain R551-3), this protein is N-acetyl-gamma-glutamyl-phosphate reductase.